The following is a 251-amino-acid chain: Chorismate mutase (251 aa).

One can recognise a Chorismate mutase domain in the interval 1 to 251 (MSLVNEKLKL…EVDYLLARLL (251 aa)). L-tyrosine contacts are provided by Arg74, Arg75, Asn134, Gly136, and Ser137. L-tryptophan contacts are provided by Asn134, Gly136, and Ser137.

As to quaternary structure, homodimer.

Its subcellular location is the cytoplasm. The enzyme catalyses chorismate = prephenate. Its pathway is metabolic intermediate biosynthesis; prephenate biosynthesis; prephenate from chorismate: step 1/1. Each dimer has two allosteric binding sites that can bind the regulatory effectors tryptophan or tyrosine. Can bind either one tryptophan or one tyrosine, two tryptophan or two tyrosine or one tryptophan and one tyrosine, which differentially affect the catalytic activity. Activated by tryptophan and subject to feedback inhibition by tyrosine. In the presence of both tryptophan and tyrosine, the enzyme is in the activated state. Functionally, catalyzes the Claisen rearrangement of chorismate to prephenate. Acts at the first branch point in the aromatic amino acid pathway where it steers biosynthesis towards phenylalanine and tyrosine, and away from tryptophan. This Schizosaccharomyces pombe (strain 972 / ATCC 24843) (Fission yeast) protein is Chorismate mutase.